A 38-amino-acid chain; its full sequence is Cytochrome b6-f complex subunit 5 (38 aa).

The helical transmembrane segment at 5–25 threads the bilayer; that stretch reads LVLGIVLGLIPITLAGLFVAA.

This sequence belongs to the PetG family. In terms of assembly, the 4 large subunits of the cytochrome b6-f complex are cytochrome b6, subunit IV (17 kDa polypeptide, PetD), cytochrome f and the Rieske protein, while the 4 small subunits are PetG, PetL, PetM and PetN. The complex functions as a dimer.

Its subcellular location is the cellular thylakoid membrane. In terms of biological role, component of the cytochrome b6-f complex, which mediates electron transfer between photosystem II (PSII) and photosystem I (PSI), cyclic electron flow around PSI, and state transitions. PetG is required for either the stability or assembly of the cytochrome b6-f complex. This chain is Cytochrome b6-f complex subunit 5, found in Microcystis aeruginosa (strain NIES-843 / IAM M-2473).